An 86-amino-acid chain; its full sequence is Candiduxin-1 (86 aa).

Residues 1 to 21 (MKTLLLTLVVLTIACLDLGYT) form the signal peptide. 4 disulfide bridges follow: cysteine 24–cysteine 45, cysteine 38–cysteine 62, cysteine 66–cysteine 78, and cysteine 79–cysteine 84.

Belongs to the three-finger toxin family. Short-chain subfamily. Orphan group IX sub-subfamily. In terms of tissue distribution, expressed by the venom gland.

It localises to the secreted. This is Candiduxin-1 from Bungarus candidus (Malayan krait).